The sequence spans 29 residues: Dermaseptin-J8 (29 aa).

As to expression, expressed by the skin glands.

Its subcellular location is the secreted. In terms of biological role, has antimicrobial activity. This Phasmahyla jandaia (Jandaia leaf frog) protein is Dermaseptin-J8.